We begin with the raw amino-acid sequence, 622 residues long: Protein translocase subunit SecD (622 aa).

6 consecutive transmembrane segments (helical) span residues 6 to 26, 460 to 480, 485 to 505, 512 to 532, 559 to 579, and 584 to 604; these read FKIG…YPTV, AGLR…IFYY, MIAD…LAAF, PGIA…VLIF, AIFD…SFGV, and GFAV…IVIT.

It belongs to the SecD/SecF family. SecD subfamily. Forms a complex with SecF. Part of the essential Sec protein translocation apparatus which comprises SecA, SecYEG and auxiliary proteins SecDF. Other proteins may also be involved.

Its subcellular location is the cell inner membrane. Part of the Sec protein translocase complex. Interacts with the SecYEG preprotein conducting channel. SecDF uses the proton motive force (PMF) to complete protein translocation after the ATP-dependent function of SecA. In Rhodothermus marinus (strain ATCC 43812 / DSM 4252 / R-10) (Rhodothermus obamensis), this protein is Protein translocase subunit SecD.